The primary structure comprises 452 residues: 1,3-beta-glucanosyltransferase gel1 (452 aa).

A signal peptide spans 1-19 (MKASAVTAALAVGASTVLA). Cysteines 71 and 100 form a disulfide. (1,3-beta-D-glucosyl)n-binding residues include Y89, N159, E160, D201, and R206. The Proton donor role is filled by E160. 2 cysteine pairs are disulfide-bonded: C215–C345 and C233–C264. N249 carries N-linked (GlcNAc...) asparagine glycosylation. Residue E261 is the Nucleophile of the active site. Position 292 (Y292) interacts with (1,3-beta-D-glucosyl)n. The segment covering 325–340 (EKTSNPSGDGNYNKTG) has biased composition (polar residues). The disordered stretch occupies residues 325–419 (EKTSNPSGDG…SGTSTSSKGA (95 aa)). The N-linked (GlcNAc...) asparagine glycan is linked to N337. A compositionally biased stretch (low complexity) spans 393-419 (STATAEPGSGSATGSSSSGTSTSSKGA). A419 is lipidated: GPI-like-anchor amidated alanine. A propeptide spans 420–452 (AAGLTVPSLTMAPVVVGAVTLLSTVFGAGLVLL) (removed in mature form).

This sequence belongs to the glycosyl hydrolase 72 family. The GPI-like anchor contains a phosphoceramide lipid group.

It is found in the cell membrane. In terms of biological role, splits internally a 1,3-beta-glucan molecule and transfers the newly generated reducing end (the donor) to the non-reducing end of another 1,3-beta-glucan molecule (the acceptor) forming a 1,3-beta linkage, resulting in the elongation of 1,3-beta-glucan chains in the cell wall. Involved in cell wall morphogenesis. This chain is 1,3-beta-glucanosyltransferase gel1 (gel1), found in Aspergillus fumigatus (strain ATCC MYA-4609 / CBS 101355 / FGSC A1100 / Af293) (Neosartorya fumigata).